A 261-amino-acid polypeptide reads, in one-letter code: MSYTPGIGGDPAQLAQRISSNIQKITQCSAEIQRTLNQLGTPQDTPELRQQLQQEQQYTNQLAKETDKYIKEFGFLPTTPSEQRQRKIQKDRLVAEFTTALTNFQKVQRQAAEREKEFVARVRASSRVSGGFPEDSSKEKNFVSWESQTQPQVQVQDEEITEDDLRLIHERESSIRQLEADIMDINEIFKDLGMMIHEQGDVIDSIEANVESAEVHVQQANQQLSRAANYQRKSRKTLCIIILILVVGIVIIFFIVWGLKG.

S2 is subject to N-acetylserine. Residues 2 to 238 (SYTPGIGGDP…NYQRKSRKTL (237 aa)) are Cytoplasmic-facing. T4 bears the Phosphothreonine mark. Residues 47–68 (ELRQQLQQEQQYTNQLAKETDK) adopt a coiled-coil conformation. Position 79 is a phosphothreonine (T79). 4 positions are modified to phosphoserine: S125, S126, S129, and S205. The interval 128 to 148 (VSGGFPEDSSKEKNFVSWESQ) is disordered. The region spanning 165-227 (LRLIHERESS…QQANQQLSRA (63 aa)) is the t-SNARE coiled-coil homology domain. The chain crosses the membrane as a helical; Anchor for type IV membrane protein span at residues 239 to 259 (CIIILILVVGIVIIFFIVWGL). The Vesicular segment spans residues 260-261 (KG).

Belongs to the syntaxin family. As to quaternary structure, interacts with VPS11, VPS16 and VPS18. Interacts with VPS33A. Forms a SNARE complex with VTI1B, STX8 and VAMP8 which functions in the homotypic fusion of late endosomes. Component of the SNARE complex composed of STX7, STX8, VAMP7 and VTI1B that is required for heterotypic fusion of late endosomes with lysosomes. Interacts with TPC1. As to expression, detected in all tissues tested. Highest expression is found in kidney followed by lung, spleen, heart and brain. Lower expression, in skeletal muscle, liver and testis.

It localises to the early endosome membrane. Its function is as follows. May be involved in protein trafficking from the plasma membrane to the early endosome (EE) as well as in homotypic fusion of endocytic organelles. Mediates the endocytic trafficking from early endosomes to late endosomes and lysosomes. In Rattus norvegicus (Rat), this protein is Syntaxin-7 (Stx7).